A 177-amino-acid chain; its full sequence is Large ribosomal subunit protein uL6 (177 aa).

This sequence belongs to the universal ribosomal protein uL6 family. Part of the 50S ribosomal subunit.

Its function is as follows. This protein binds to the 23S rRNA, and is important in its secondary structure. It is located near the subunit interface in the base of the L7/L12 stalk, and near the tRNA binding site of the peptidyltransferase center. The sequence is that of Large ribosomal subunit protein uL6 from Erythrobacter litoralis (strain HTCC2594).